We begin with the raw amino-acid sequence, 80 residues long: UPF0270 protein AHA_0994 (80 aa).

This sequence belongs to the UPF0270 family.

The sequence is that of UPF0270 protein AHA_0994 from Aeromonas hydrophila subsp. hydrophila (strain ATCC 7966 / DSM 30187 / BCRC 13018 / CCUG 14551 / JCM 1027 / KCTC 2358 / NCIMB 9240 / NCTC 8049).